Here is a 370-residue protein sequence, read N- to C-terminus: Anhydro-N-acetylmuramic acid kinase (370 aa).

12-19 (GTSLDGID) contributes to the ATP binding site.

Belongs to the anhydro-N-acetylmuramic acid kinase family.

It carries out the reaction 1,6-anhydro-N-acetyl-beta-muramate + ATP + H2O = N-acetyl-D-muramate 6-phosphate + ADP + H(+). The protein operates within amino-sugar metabolism; 1,6-anhydro-N-acetylmuramate degradation. Its pathway is cell wall biogenesis; peptidoglycan recycling. Its function is as follows. Catalyzes the specific phosphorylation of 1,6-anhydro-N-acetylmuramic acid (anhMurNAc) with the simultaneous cleavage of the 1,6-anhydro ring, generating MurNAc-6-P. Is required for the utilization of anhMurNAc either imported from the medium or derived from its own cell wall murein, and thus plays a role in cell wall recycling. The polypeptide is Anhydro-N-acetylmuramic acid kinase (Yersinia enterocolitica serotype O:8 / biotype 1B (strain NCTC 13174 / 8081)).